Consider the following 190-residue polypeptide: Holliday junction branch migration complex subunit RuvA (190 aa).

Residues methionine 1–glycine 64 are domain I. Positions serine 65–glycine 137 are domain II. Positions glycine 137–serine 141 are flexible linker. The segment at valine 142–lysine 190 is domain III.

It belongs to the RuvA family. As to quaternary structure, homotetramer. Forms an RuvA(8)-RuvB(12)-Holliday junction (HJ) complex. HJ DNA is sandwiched between 2 RuvA tetramers; dsDNA enters through RuvA and exits via RuvB. An RuvB hexamer assembles on each DNA strand where it exits the tetramer. Each RuvB hexamer is contacted by two RuvA subunits (via domain III) on 2 adjacent RuvB subunits; this complex drives branch migration. In the full resolvosome a probable DNA-RuvA(4)-RuvB(12)-RuvC(2) complex forms which resolves the HJ.

It localises to the cytoplasm. In terms of biological role, the RuvA-RuvB-RuvC complex processes Holliday junction (HJ) DNA during genetic recombination and DNA repair, while the RuvA-RuvB complex plays an important role in the rescue of blocked DNA replication forks via replication fork reversal (RFR). RuvA specifically binds to HJ cruciform DNA, conferring on it an open structure. The RuvB hexamer acts as an ATP-dependent pump, pulling dsDNA into and through the RuvAB complex. HJ branch migration allows RuvC to scan DNA until it finds its consensus sequence, where it cleaves and resolves the cruciform DNA. This Polaromonas sp. (strain JS666 / ATCC BAA-500) protein is Holliday junction branch migration complex subunit RuvA.